A 138-amino-acid polypeptide reads, in one-letter code: Basic phospholipase A2 PL-X' (138 aa).

The N-terminal stretch at 1–16 (MRTLWIMAVLLVGVEG) is a signal peptide. 7 cysteine pairs are disulfide-bonded: C42–C131, C44–C60, C59–C111, C65–C138, C66–C104, C73–C97, and C91–C102. Ca(2+) is bound by residues Y43, G45, and G47. The active site involves H63. A Ca(2+)-binding site is contributed by D64. D105 is an active-site residue.

The protein belongs to the phospholipase A2 family. Group II subfamily. D49 sub-subfamily. Ca(2+) serves as cofactor. In terms of tissue distribution, expressed by the venom gland.

The protein resides in the secreted. The enzyme catalyses a 1,2-diacyl-sn-glycero-3-phosphocholine + H2O = a 1-acyl-sn-glycero-3-phosphocholine + a fatty acid + H(+). Functionally, PLA2 catalyzes the calcium-dependent hydrolysis of the 2-acyl groups in 3-sn-phosphoglycerides. The sequence is that of Basic phospholipase A2 PL-X' from Protobothrops flavoviridis (Habu).